A 451-amino-acid polypeptide reads, in one-letter code: Phosphoglucosamine mutase (451 aa).

Ser-101 (phosphoserine intermediate) is an active-site residue. The Mg(2+) site is built by Ser-101, Asp-240, Asp-242, and Asp-244. Residue Ser-101 is modified to Phosphoserine.

This sequence belongs to the phosphohexose mutase family. The cofactor is Mg(2+). In terms of processing, activated by phosphorylation.

It catalyses the reaction alpha-D-glucosamine 1-phosphate = D-glucosamine 6-phosphate. Catalyzes the conversion of glucosamine-6-phosphate to glucosamine-1-phosphate. The protein is Phosphoglucosamine mutase of Alkalilimnicola ehrlichii (strain ATCC BAA-1101 / DSM 17681 / MLHE-1).